Consider the following 521-residue polypeptide: GMP synthase [glutamine-hydrolyzing] (521 aa).

A Glutamine amidotransferase type-1 domain is found at 10-204 (SLLILDFGSQ…ALGICGCEND (195 aa)). The active-site Nucleophile is C87. Catalysis depends on residues H178 and E180. A GMPS ATP-PPase domain is found at 205 to 396 (WNMHNFAEEQ…LGMPREMLMR (192 aa)). 232-238 (SGGVDSS) provides a ligand contact to ATP.

Homodimer.

It catalyses the reaction XMP + L-glutamine + ATP + H2O = GMP + L-glutamate + AMP + diphosphate + 2 H(+). The protein operates within purine metabolism; GMP biosynthesis; GMP from XMP (L-Gln route): step 1/1. Catalyzes the synthesis of GMP from XMP. This chain is GMP synthase [glutamine-hydrolyzing], found in Wolinella succinogenes (strain ATCC 29543 / DSM 1740 / CCUG 13145 / JCM 31913 / LMG 7466 / NCTC 11488 / FDC 602W) (Vibrio succinogenes).